A 149-amino-acid polypeptide reads, in one-letter code: 3-dehydroquinate dehydratase (149 aa).

The active-site Proton acceptor is Tyr22. Substrate-binding residues include Asn74, His80, and Asp87. His100 serves as the catalytic Proton donor. Substrate-binding positions include 101 to 102 and Arg111; that span reads LS.

This sequence belongs to the type-II 3-dehydroquinase family. In terms of assembly, homododecamer.

The catalysed reaction is 3-dehydroquinate = 3-dehydroshikimate + H2O. It participates in metabolic intermediate biosynthesis; chorismate biosynthesis; chorismate from D-erythrose 4-phosphate and phosphoenolpyruvate: step 3/7. Catalyzes a trans-dehydration via an enolate intermediate. In Vesicomyosocius okutanii subsp. Calyptogena okutanii (strain HA), this protein is 3-dehydroquinate dehydratase.